The following is a 175-amino-acid chain: Large ribosomal subunit protein uL10 (175 aa).

It belongs to the universal ribosomal protein uL10 family. Part of the ribosomal stalk of the 50S ribosomal subunit. The N-terminus interacts with L11 and the large rRNA to form the base of the stalk. The C-terminus forms an elongated spine to which L12 dimers bind in a sequential fashion forming a multimeric L10(L12)X complex.

In terms of biological role, forms part of the ribosomal stalk, playing a central role in the interaction of the ribosome with GTP-bound translation factors. In Synechococcus sp. (strain CC9902), this protein is Large ribosomal subunit protein uL10.